The following is a 423-amino-acid chain: Enolase (423 aa).

Glutamine 165 contributes to the (2R)-2-phosphoglycerate binding site. Glutamate 209 acts as the Proton donor in catalysis. 3 residues coordinate Mg(2+): aspartate 244, glutamate 285, and aspartate 310. Residues lysine 335, arginine 364, serine 365, and lysine 386 each contribute to the (2R)-2-phosphoglycerate site. Catalysis depends on lysine 335, which acts as the Proton acceptor.

Belongs to the enolase family. Homooctamer formed by a tetramer of dimers. Requires Mg(2+) as cofactor.

The protein localises to the cytoplasm. It localises to the secreted. It is found in the cell surface. The catalysed reaction is (2R)-2-phosphoglycerate = phosphoenolpyruvate + H2O. The protein operates within carbohydrate degradation; glycolysis; pyruvate from D-glyceraldehyde 3-phosphate: step 4/5. The covalent binding to the substrate causes inactivation of the enzyme, and possibly serves as a signal for the export of the protein. In terms of biological role, catalyzes the reversible conversion of 2-phosphoglycerate (2-PG) into phosphoenolpyruvate (PEP). It is essential for the degradation of carbohydrates via glycolysis. This chain is Enolase, found in Methanocaldococcus jannaschii (strain ATCC 43067 / DSM 2661 / JAL-1 / JCM 10045 / NBRC 100440) (Methanococcus jannaschii).